The primary structure comprises 323 residues: Probable cell division protein WhiA (323 aa).

Residues 275–309 (TLKELGEMLTTGQVSKSGINHRLRKLDQIAERLRS) constitute a DNA-binding region (H-T-H motif).

It belongs to the WhiA family.

Its function is as follows. Involved in cell division and chromosome segregation. The protein is Probable cell division protein WhiA of Listeria innocua serovar 6a (strain ATCC BAA-680 / CLIP 11262).